Reading from the N-terminus, the 121-residue chain is Two-component response regulator ORR12 (121 aa).

The Response regulatory domain occupies H5–I121. The residue at position 55 (D55) is a 4-aspartylphosphate.

The protein belongs to the ARR family. Type-A subfamily. In terms of processing, two-component system major event consists of a His-to-Asp phosphorelay between a sensor histidine kinase (HK) and a response regulator (RR). In plants, the His-to-Asp phosphorelay involves an additional intermediate named Histidine-containing phosphotransfer protein (HPt). This multistep phosphorelay consists of a His-Asp-His-Asp sequential transfer of a phosphate group between first a His and an Asp of the HK protein, followed by the transfer to a conserved His of the HPt protein and finally the transfer to an Asp in the receiver domain of the RR protein. As to expression, expressed in flowers and panicles.

In terms of biological role, functions as a response regulator involved in His-to-Asp phosphorelay signal transduction system. Phosphorylation of the Asp residue in the receiver domain activates the ability of the protein to promote the transcription of target genes. Type-A response regulators seem to act as negative regulators of the cytokinin signaling. The protein is Two-component response regulator ORR12 of Oryza sativa subsp. japonica (Rice).